The chain runs to 927 residues: MTMTDASDLLSLSYSHYLARAAAARPALAERIAAWAAAPVTRAALDARLDELLAQGGQPPSEDALKKALRQLRGEAFGAVAERDLAGRADVAEVTGTMTDLAEAAIQRALALLAAELEAQYGEPRGPSGERLALGVVGMGKLGGRELNVSSDIDLIFVYEDDGETAGGARGPISVHEFFTRLGRRLIGVLSEATADGYVFRVDMRLRPNGDSGPLVCSLGMLEEYFYVQGREWERYAWIKGRLVTERASAAARRLAQQLDAIVKPFVYRRYLDFGVIGAIRSLHEQIRQEARRRATMRPDKADDIKLGRGGIREIEFSAQVFQLIRGGQDAGFRVQPTLAVLRHASASGLITEEVRAGLTHAYLFLRTLEHRLQYRNDAQTHAMPVDPAERAALAASLGFADYAALIDRLDQHRAFVEAQFDQVFADKADGGARREDDQAAGCIWSGALADDGADEALVARLAELGFADPAAVLARLQAVWRSSRYAGLPESSRVRFDRVAHRALEAAPGIDAAHRDETVVRCFDLLETVGRRGAYLALLTEYPAALRRVLSVLGATRWGGGYLIRHPQLLDELLDDEAIDSPFDWPAFKDALRRRLAAADGAEHQMDLLRHAHQAEVFRILLLDLAGRLSVEHVSDRLSELADAMLDVTIEVVWSQLAKRHRDTPCFAAIAYGKLGGKELGYASDLDLIFLYDDPDERAADVYTTFARRLITWLTTATGAGTLFDIDLRLRPNGEAGLLVTDLDAFRRYQLREGDAANTAWVWEHQALTRARYSAGDARIGAAFEAIRVQVLTTPRDAAVLAREIVEMREKVLAGHPNTTERFDLKHDRGGMVDIEFAVQYWVLLHAARHPEMIRNTGNIALLREVSRFGLMSEEEAETVGAAYRTYRKLQHRLRLDGMEKARVEPERVAAERQAVAALWARVFGA.

The interval 1-428 (MTMTDASDLL…AQFDQVFADK (428 aa)) is adenylyl removase. Residues 438–927 (DQAAGCIWSG…AALWARVFGA (490 aa)) form an adenylyl transferase region.

Belongs to the GlnE family. Requires Mg(2+) as cofactor.

The catalysed reaction is [glutamine synthetase]-O(4)-(5'-adenylyl)-L-tyrosine + phosphate = [glutamine synthetase]-L-tyrosine + ADP. The enzyme catalyses [glutamine synthetase]-L-tyrosine + ATP = [glutamine synthetase]-O(4)-(5'-adenylyl)-L-tyrosine + diphosphate. In terms of biological role, involved in the regulation of glutamine synthetase GlnA, a key enzyme in the process to assimilate ammonia. When cellular nitrogen levels are high, the C-terminal adenylyl transferase (AT) inactivates GlnA by covalent transfer of an adenylyl group from ATP to specific tyrosine residue of GlnA, thus reducing its activity. Conversely, when nitrogen levels are low, the N-terminal adenylyl removase (AR) activates GlnA by removing the adenylyl group by phosphorolysis, increasing its activity. The regulatory region of GlnE binds the signal transduction protein PII (GlnB) which indicates the nitrogen status of the cell. This chain is Bifunctional glutamine synthetase adenylyltransferase/adenylyl-removing enzyme, found in Burkholderia pseudomallei (strain K96243).